The chain runs to 742 residues: Collectin-12 (742 aa).

At 1-37 (MKDDFAEEEEVQSFGYKRFGIQEGTQCTKCKNNWALK) the chain is on the cytoplasmic side. The helical; Signal-anchor for type II membrane protein transmembrane segment at 38–58 (FSIILLYILCALLTITVAILG) threads the bilayer. The Extracellular segment spans residues 59–742 (YKVVEKMDNV…DRETVLSSAL (684 aa)). Residue Asn-67 is glycosylated (N-linked (GlcNAc...) asparagine). Residues 73–141 (ETSRQTYDDK…NKDTLEKLQA (69 aa)) are a coiled coil. Asn-159, Asn-168, and Asn-271 each carry an N-linked (GlcNAc...) asparagine glycan. Residues 215-328 (QQRNLITNLQ…KDAENRTAIK (114 aa)) are a coiled coil. Residues 439–608 (TILQGPPGPR…TPAPEDNGCP (170 aa)) are disordered. 3 Collagen-like domains span residues 443–472 (GPPG…KGEK), 473–529 (GEPG…PGPP), and 530–589 (GPPG…SGAV). Low complexity-rich tracts occupy residues 502 to 525 (KGSQ…SSGD) and 534 to 556 (KEGL…VGEP). Residues 571 to 585 (PGMPGPKGPPGPPGP) show a composition bias toward pro residues. Disulfide bonds link Cys-607/Cys-618, Cys-635/Cys-730, and Cys-708/Cys-722. The 118-residue stretch at 614-731 (FTDKCYYFSV…CEDVNNFICE (118 aa)) folds into the C-type lectin domain. Ca(2+)-binding residues include Phe-644, Asn-646, Glu-650, Asp-670, and Glu-674. Positions 691, 694, and 696 each coordinate a carbohydrate. 8 residues coordinate Ca(2+): Gln-694, Asp-696, Asn-697, Glu-706, Asp-707, Asn-718, Asp-719, and Glu-731. Glu-706 lines the a carbohydrate pocket. A carbohydrate contacts are provided by Asn-718 and Asp-719.

In terms of assembly, the extracellular domain forms a stable trimer. The extracellular domain interacts with fibrillar amyloid-beta peptide. As to expression, expressed in perivascular macrophages. Expressed in plaques-surrounding reactive astrocytes and in perivascular astrocytes associated with cerebral amyloid angiopathy (CAA) in the temporal cortex of Alzheimer patient (at protein level). Strongly expressed in placenta. Moderately expressed in heart, skeletal muscle, small intestine and lung. Weakly expressed in brain, colon, thymus and kidney. Expressed in nurse-like cells. Expressed in reactive astrocytes and vascular/perivascular cells in the brain of Alzheimer patient.

It localises to the membrane. Scavenger receptor that displays several functions associated with host defense. Promotes binding and phagocytosis of Gram-positive, Gram-negative bacteria and yeast. Mediates the recognition, internalization and degradation of oxidatively modified low density lipoprotein (oxLDL) by vascular endothelial cells. Binds to several carbohydrates including Gal-type ligands, D-galactose, L- and D-fucose, GalNAc, T and Tn antigens in a calcium-dependent manner and internalizes specifically GalNAc in nurse-like cells. Also binds to sialyl Lewis X or a trisaccharide and asialo-orosomucoid (ASOR). May also play a role in the clearance of amyloid-beta in Alzheimer disease. This is Collectin-12 (COLEC12) from Homo sapiens (Human).